A 232-amino-acid chain; its full sequence is Phosphatidylserine decarboxylase proenzyme (232 aa).

Ser190 acts as the Schiff-base intermediate with substrate; via pyruvic acid in catalysis. Ser190 is modified (pyruvic acid (Ser); by autocatalysis).

The protein belongs to the phosphatidylserine decarboxylase family. PSD-A subfamily. As to quaternary structure, heterodimer of a large membrane-associated beta subunit and a small pyruvoyl-containing alpha subunit. Requires pyruvate as cofactor. Is synthesized initially as an inactive proenzyme. Formation of the active enzyme involves a self-maturation process in which the active site pyruvoyl group is generated from an internal serine residue via an autocatalytic post-translational modification. Two non-identical subunits are generated from the proenzyme in this reaction, and the pyruvate is formed at the N-terminus of the alpha chain, which is derived from the carboxyl end of the proenzyme. The post-translation cleavage follows an unusual pathway, termed non-hydrolytic serinolysis, in which the side chain hydroxyl group of the serine supplies its oxygen atom to form the C-terminus of the beta chain, while the remainder of the serine residue undergoes an oxidative deamination to produce ammonia and the pyruvoyl prosthetic group on the alpha chain.

The protein resides in the cell membrane. It catalyses the reaction a 1,2-diacyl-sn-glycero-3-phospho-L-serine + H(+) = a 1,2-diacyl-sn-glycero-3-phosphoethanolamine + CO2. The protein operates within phospholipid metabolism; phosphatidylethanolamine biosynthesis; phosphatidylethanolamine from CDP-diacylglycerol: step 2/2. Functionally, catalyzes the formation of phosphatidylethanolamine (PtdEtn) from phosphatidylserine (PtdSer). The polypeptide is Phosphatidylserine decarboxylase proenzyme (Mesorhizobium japonicum (strain LMG 29417 / CECT 9101 / MAFF 303099) (Mesorhizobium loti (strain MAFF 303099))).